A 37-amino-acid chain; its full sequence is Large ribosomal subunit protein bL36 (37 aa).

Belongs to the bacterial ribosomal protein bL36 family.

This Thermobifida fusca (strain YX) protein is Large ribosomal subunit protein bL36.